The sequence spans 117 residues: Larval cuticle protein A2B (117 aa).

Residues 12 to 15 (AAPV) form repeat 1. One can recognise a Chitin-binding type R&amp;R domain in the interval 29–95 (HPQYQYGYDV…AVVHREPLVA (67 aa)). The stretch at 108-111 (AAPV) is repeat 2.

In terms of biological role, component of the cuticle of the larva of Tenebrio molitor. In Tenebrio molitor (Yellow mealworm beetle), this protein is Larval cuticle protein A2B.